We begin with the raw amino-acid sequence, 507 residues long: E3 ubiquitin-protein ligase TRIM31 (507 aa).

The RING-type zinc finger occupies 16–56; sequence CPICMEILQDPVTIDCGHNFCLQCISQVGKTSEKIQCPLCK. A B box-type zinc finger spans residues 89–130; sequence KEDSRCQRHKEKLHYFCEQDGAFLCVVCRDSKDHKSHNVTLI. The Zn(2+) site is built by Cys-94, His-97, Cys-116, and His-122. 2 coiled-coil regions span residues 176 to 241 and 269 to 298; these read EKLK…LQSS and EDLE…DMNA. In terms of domain architecture, B30.2/SPRY spans 315–507; sequence EKESWSLLQK…VACSHITLSP (193 aa).

It belongs to the TRIM/RBCC family. As to quaternary structure, may form oligomers. Interacts with isoform p52shc of SHC1. Auto-ubiquitinated (in vitro). In terms of tissue distribution, highly expressed in the gastrointestrinal tract, with high expression in the small intestine, moderate in the large intestine and weak in the stomach and esophagus.

Its subcellular location is the cytoplasm. The protein localises to the mitochondrion. The enzyme catalyses S-ubiquitinyl-[E2 ubiquitin-conjugating enzyme]-L-cysteine + [acceptor protein]-L-lysine = [E2 ubiquitin-conjugating enzyme]-L-cysteine + N(6)-ubiquitinyl-[acceptor protein]-L-lysine.. It participates in protein modification; protein ubiquitination. Functionally, E3 ubiquitin-protein ligase that acts as a regulator of antiviral immune response and inflammation by mediating ubiquitination of substrates. Acts as a regulator of innate immune defense against viruses by mediating 'Lys-63'-linked ubiquitination of MAVS, promoting MAVS polymerization and formation of three-stranded helical filaments on mitochondria. Acts as a negative regulator of the NLRP3 inflammasome by catalyzing 'Lys-48'-linked ubiquitination of NLRP3, leading to its degradation. Regulator of Src-induced anchorage independent cell growth. This is E3 ubiquitin-protein ligase TRIM31 from Mus musculus (Mouse).